Consider the following 127-residue polypeptide: MSLLRNRLQDLPALCLCVLVLACIGACQSEAYEGTPSPPPKLKMSHWSLVTGRMKELLEPVLKRTRDRWQWFWSPSTFRGFMQTYYDDHLRDLGPRTKAWLLKSKESLLNKTHSLCPRIVCGDKDQG.

The first 27 residues, 1–27 (MSLLRNRLQDLPALCLCVLVLACIGAC), serve as a signal peptide directing secretion.

The protein belongs to the apolipoprotein C4 family.

The protein localises to the secreted. Functionally, may participate in lipoprotein metabolism. The polypeptide is Apolipoprotein C-IV (APOC4) (Papio anubis (Olive baboon)).